Reading from the N-terminus, the 141-residue chain is Zinc finger protein 593 homolog (141 aa).

Residues 1–32 form a disordered region; that stretch reads MGRYSGHGGTHTKKKQYKRARSTKNRAKDIDQ. A compositionally biased stretch (basic residues) spans 10 to 25; sequence THTKKKQYKRARSTKN. A C2H2-type zinc finger spans residues 60–84; the sequence is NYCIHCSKHFVTNEDLQSHIKGKPH.

It belongs to the ZNF593/BUD20 C2H2-type zinc-finger protein family. In terms of assembly, associates with pre-60S ribosomal particles; released from the pre-60S particle very early in the cytoplasm.

Its subcellular location is the nucleus. The protein resides in the cytoplasm. Functionally, involved in pre-60S ribosomal particles maturation by promoting the nuclear export of the 60S ribosome. This chain is Zinc finger protein 593 homolog, found in Dictyostelium discoideum (Social amoeba).